The chain runs to 630 residues: Chaperone protein HtpG (630 aa).

An a; substrate-binding region spans residues 1–338 (MTVEANKETL…SNDLSLNVSR (338 aa)). The segment at 339–555 (EILQNDSTVE…QFDMGAQMKK (217 aa)) is b. Positions 556-630 (IMEAAGQKVP…LNRLLLELAN (75 aa)) are c.

The protein belongs to the heat shock protein 90 family. In terms of assembly, homodimer.

The protein localises to the cytoplasm. Its function is as follows. Molecular chaperone. Has ATPase activity. This is Chaperone protein HtpG from Marinobacter nauticus (strain ATCC 700491 / DSM 11845 / VT8) (Marinobacter aquaeolei).